The sequence spans 445 residues: tRNA modification GTPase MnmE (445 aa).

(6S)-5-formyl-5,6,7,8-tetrahydrofolate is bound by residues R20, E79, and K119. In terms of domain architecture, TrmE-type G spans G215 to E371. N225 provides a ligand contact to K(+). GTP contacts are provided by residues N225–S230, S244–T250, and D269–G272. Mg(2+) is bound at residue S229. K(+) contacts are provided by S244, I246, and T249. T250 provides a ligand contact to Mg(2+). K445 is a (6S)-5-formyl-5,6,7,8-tetrahydrofolate binding site.

The protein belongs to the TRAFAC class TrmE-Era-EngA-EngB-Septin-like GTPase superfamily. TrmE GTPase family. In terms of assembly, homodimer. Heterotetramer of two MnmE and two MnmG subunits. The cofactor is K(+).

It localises to the cytoplasm. In terms of biological role, exhibits a very high intrinsic GTPase hydrolysis rate. Involved in the addition of a carboxymethylaminomethyl (cmnm) group at the wobble position (U34) of certain tRNAs, forming tRNA-cmnm(5)s(2)U34. This chain is tRNA modification GTPase MnmE, found in Rickettsia bellii (strain RML369-C).